The following is a 179-amino-acid chain: MSRLQEFYKSKVVADLQAKFGYKCVMEVPRITKITLNMGVSEAVADKKVIEHAVSDLTKISGQKPVVTKTRKAIAGFKIRENYPIGCMVTLRGQRMYEFLDRLVAVALPRVRDFRGISGRAFDGRGNYNIGVKEQIIFPEIEYDKIDALRGLNISITTTAKTDDEAKALLTAFSFPFRN.

This sequence belongs to the universal ribosomal protein uL5 family. As to quaternary structure, part of the 50S ribosomal subunit; part of the 5S rRNA/L5/L18/L25 subcomplex. Contacts the 5S rRNA and the P site tRNA. Forms a bridge to the 30S subunit in the 70S ribosome.

Functionally, this is one of the proteins that bind and probably mediate the attachment of the 5S RNA into the large ribosomal subunit, where it forms part of the central protuberance. In the 70S ribosome it contacts protein S13 of the 30S subunit (bridge B1b), connecting the 2 subunits; this bridge is implicated in subunit movement. Contacts the P site tRNA; the 5S rRNA and some of its associated proteins might help stabilize positioning of ribosome-bound tRNAs. The chain is Large ribosomal subunit protein uL5 from Bordetella bronchiseptica (strain ATCC BAA-588 / NCTC 13252 / RB50) (Alcaligenes bronchisepticus).